Here is a 229-residue protein sequence, read N- to C-terminus: Ribonuclease T (229 aa).

The Exonuclease domain maps to 23-197 (VIIDVETAGF…YDTERTAKLF (175 aa)). Mg(2+) contacts are provided by aspartate 26, glutamate 28, histidine 184, and aspartate 189. The active-site Proton donor/acceptor is the histidine 184.

This sequence belongs to the RNase T family. As to quaternary structure, homodimer. The cofactor is Mg(2+).

In terms of biological role, trims short 3' overhangs of a variety of RNA species, leaving a one or two nucleotide 3' overhang. Responsible for the end-turnover of tRNA: specifically removes the terminal AMP residue from uncharged tRNA (tRNA-C-C-A). Also appears to be involved in tRNA biosynthesis. This Haemophilus influenzae (strain PittGG) protein is Ribonuclease T.